A 1733-amino-acid polypeptide reads, in one-letter code: Probable nuclear antigen (1733 aa).

10 disordered regions span residues 1-41, 71-394, 437-506, 520-548, 882-907, 993-1141, 1223-1242, 1348-1475, 1585-1608, and 1630-1665; these read MNLF…THFT, PHPP…EQQV, AGAG…EGAQ, APAAAGDEDGPQRGAEPPAVGRAVPEGGA, LGGGGGGGQQRGSGVRSGPESEGAAL, AGGP…EDAA, PERVLGGHGVPDVRQRRGHA, GAGP…GRAG, SGGGGAAAAGRRDRPGGGGGWGSG, and PRRRPGLTDRVPPRGGPSPRGCRGAGRAGGGGRGGC. The span at 21–31 shows a compositional bias: basic residues; it reads DHHHQQHHHHP. Basic and acidic residues predominate over residues 77 to 97; that stretch reads PQDHHRPTPARDHRDPRDHLP. Positions 113–131 are enriched in low complexity; that stretch reads TTTTTIKDPQHPQDPLLLP. A compositionally biased stretch (basic and acidic residues) spans 135 to 147; it reads LQEEDPHLLRPTR. Pro residues predominate over residues 179–189; the sequence is GGGPPSPPPRP. The span at 190–201 shows a compositional bias: low complexity; that stretch reads STSSSSSHQGPP. Residues 202 to 220 show a composition bias toward pro residues; the sequence is STRPPPPQRPPPRWPPPSP. The span at 227–240 shows a compositional bias: polar residues; it reads RAGSENTAQTLFSH. The span at 272 to 299 shows a compositional bias: pro residues; sequence PPPSPPPRPPPPLPPPPPPPPPPQPPPA. Basic residues predominate over residues 316-326; that stretch reads GGRRRGGKRRR. Residues 336–354 are compositionally biased toward acidic residues; that stretch reads DAEEEEDGDGDEDEDEDRA. Positions 355 to 364 are enriched in basic and acidic residues; the sequence is EGEGREDGGE. 3 stretches are compositionally biased toward gly residues: residues 365–374, 454–466, and 479–494; these read GPRGAGGGAG, GAPGGGADAGLEG, and GGDGARGQHQRGGLGV. The segment covering 495-506 has biased composition (low complexity); that stretch reads GLQQRRGAEGAQ. The span at 882–892 shows a compositional bias: gly residues; that stretch reads LGGGGGGGQQR. Over residues 893-907 the composition is skewed to low complexity; sequence GSGVRSGPESEGAAL. Gly residues-rich tracts occupy residues 993–1004 and 1027–1043; these read AGGPGAGEAGGG and AGRGLRGPGPRGGLGEP. Composition is skewed to basic and acidic residues over residues 1078 to 1087 and 1100 to 1112; these read GAGDEGDRVR and RVAEREQRGRHLL. Over residues 1116 to 1127 the composition is skewed to gly residues; sequence GPEGGRGAGGRG. Over residues 1385 to 1407 the composition is skewed to gly residues; that stretch reads GPGGLRGRGRGGRGGGGGGGGRG. Basic residues-rich tracts occupy residues 1408–1420 and 1444–1453; these read PRGRGGRRRRRWR and RGGRGGRGGR. The span at 1454–1474 shows a compositional bias: gly residues; it reads GRGGGRAPRGGGGGPGGGGRA. Over residues 1652–1665 the composition is skewed to gly residues; the sequence is RGAGRAGGGGRGGC.

This Sus scrofa (Pig) protein is Probable nuclear antigen.